Reading from the N-terminus, the 80-residue chain is Metallothionein-like protein type 2 (80 aa).

This sequence belongs to the metallothionein superfamily. Type 15 family.

Metallothioneins have a high content of cysteine residues that bind various heavy metals. The polypeptide is Metallothionein-like protein type 2 (MTI) (Ricinus communis (Castor bean)).